The sequence spans 110 residues: Protein C-ets-2 (110 aa).

The ETS DNA-binding region spans 1-84 (SGPIQLWQFL…AGKRYVYRFV (84 aa)).

The protein belongs to the ETS family.

It localises to the nucleus. Functionally, probable transcription factor. This is Protein C-ets-2 (ETS-2) from Lytechinus variegatus (Green sea urchin).